Here is a 340-residue protein sequence, read N- to C-terminus: MALLKKRKHERSEQDQEYFQCYSDVSIHEEMIADTVRTNGYKQAILHNHCALQGLTVLDVGAGTGILSVFCVQAGATRVYAVEASAVSQLASHVVTLNGMDNKVKVLNSPVESAEIPEQVDAIVSEWMGYALMYESMLPSVIYARDKWLKPGGIILPSAADLFIAPINDRVVESRLDFWNEVKGLYGVDMSCMRPFAHSCIMNKEMAVNLLSPEDVLSFPVRFASLDLNVCTQEEVRNLHGSFQFSCFGSSLLHGFALWFTVTFPGEKTVTLSTSPYGEETHWKQTLLYLDEEIQVEQDTDITGDITLSPSDVNPRHLRALLNYSIGGGLRRTKHFHMGT.

An SAM-dependent MTase PRMT-type domain is found at 15-339 (DQEYFQCYSD…LRRTKHFHMG (325 aa)). The S-adenosyl-L-methionine site is built by H28, R37, G61, E83, and E112. Residues E126 and E135 contribute to the active site.

The protein belongs to the class I-like SAM-binding methyltransferase superfamily. Protein arginine N-methyltransferase family. PRMT6 subfamily.

It localises to the nucleus. It catalyses the reaction L-arginyl-[protein] + 2 S-adenosyl-L-methionine = N(omega),N(omega)-dimethyl-L-arginyl-[protein] + 2 S-adenosyl-L-homocysteine + 2 H(+). In terms of biological role, arginine methyltransferase that can catalyze the formation of both omega-N monomethylarginine (MMA) and asymmetrical dimethylarginine (aDMA), with a strong preference for the formation of aDMA. Preferentially methylates arginyl residues present in a glycine and arginine-rich domain and displays preference for monomethylated substrates. Specifically mediates the asymmetric dimethylation of histone H3 'Arg-2' to form H3R2me2a. H3R2me2a represents a specific tag for epigenetic transcriptional repression and is mutually exclusive with methylation on histone H3 'Lys-4' (H3K4me2 and H3K4me3). Acts as a transcriptional repressor of various genes such as HOXA2, THBS1 and TP53. Repression of TP53 blocks cellular senescence. Also methylates histone H2A and H4 'Arg-3' (H2AR3me and H4R3me, respectively). Acts as a regulator of DNA base excision during DNA repair by mediating the methylation of DNA polymerase beta (POLB), leading to the stimulation of its polymerase activity by enhancing DNA binding and processivity. Methylates HMGA1. Regulates alternative splicing events. Acts as a transcriptional coactivator of a number of steroid hormone receptors including ESR1, ESR2, PGR and NR3C1. This is Protein arginine N-methyltransferase 6 (prmt6) from Xenopus laevis (African clawed frog).